The primary structure comprises 201 residues: Glycerol-3-phosphate acyltransferase (201 aa).

6 helical membrane-spanning segments follow: residues 10-30 (MLIGALIFGYVLGSIPFGLIL), 60-80 (LAAATLILDALKGTAAALIAA), 86-106 (AAIAAGFGAFIGHLFPVWIGF), 116-136 (LGVLIGLAWAGALVFAAAWIV), 139-159 (LLTRYSSLSALVASLVVPIAL), and 166-186 (ALAALFAIMTVIVFIKHRANI).

It belongs to the PlsY family. As to quaternary structure, probably interacts with PlsX.

It is found in the cell inner membrane. It catalyses the reaction an acyl phosphate + sn-glycerol 3-phosphate = a 1-acyl-sn-glycero-3-phosphate + phosphate. Its pathway is lipid metabolism; phospholipid metabolism. Functionally, catalyzes the transfer of an acyl group from acyl-phosphate (acyl-PO(4)) to glycerol-3-phosphate (G3P) to form lysophosphatidic acid (LPA). This enzyme utilizes acyl-phosphate as fatty acyl donor, but not acyl-CoA or acyl-ACP. The sequence is that of Glycerol-3-phosphate acyltransferase from Brucella suis (strain ATCC 23445 / NCTC 10510).